The sequence spans 451 residues: UPF0210 protein Cbei_2352 (451 aa).

It belongs to the UPF0210 family. In terms of assembly, homodimer.

The sequence is that of UPF0210 protein Cbei_2352 from Clostridium beijerinckii (strain ATCC 51743 / NCIMB 8052) (Clostridium acetobutylicum).